Here is a 124-residue protein sequence, read N- to C-terminus: Glutaredoxin-2 (124 aa).

A disulfide bridge connects residues cysteine 13 and cysteine 16.

It belongs to the glutaredoxin family. As to quaternary structure, homodimer.

Its subcellular location is the host cytoplasm. Its function is as follows. Glutaredoxin necessary for virion morphogenesis and virus replication. Functions as a thiol-disulfide transfer protein between membrane-associated OPG128 and substrates OPG095 or OPG053. The complete pathway for formation of disulfide bonds in intracellular virion membrane proteins sequentially involves oxidation of OPG072, OPG128 and OPG088. Exhibit thioltransferase and dehydroascorbate reductase activities in vitro. The sequence is that of Glutaredoxin-2 (OPG088) from Bos taurus (Bovine).